The following is a 39-amino-acid chain: IIECVFSCDIEKEGKPCKPKGEKKCSGGWKCKIKLCLKI.

Disulfide bonds link Cys-4-Cys-25, Cys-8-Cys-31, and Cys-17-Cys-36.

Belongs to the neurotoxin 12 (Hwtx-2) family. 06 (TXP1) subfamily. As to expression, expressed by the venom gland.

It localises to the secreted. Its function is as follows. Inhibits voltage-gated calcium channels (Cav) in rat cerebellar granule cells. Has insecticidal activity. This is Omega-theraphotoxin-Bs1b from Brachypelma smithi (Mexican red knee tarantula).